The chain runs to 82 residues: uncharacterized protein (82 aa).

The protein resides in the plastid. Its subcellular location is the chloroplast. This is an uncharacterized protein from Vicia faba (Broad bean).